Reading from the N-terminus, the 426-residue chain is Protein prenyltransferase alpha subunit repeat-containing protein 1 (426 aa).

PFTA repeat units lie at residues 86-119 (ALVD…VLNP), 121-154 (KDLY…QKEC), 180-213 (EEMR…AKGN), and 219-252 (DELS…AKEL). A disordered region spans residues 255–279 (AAEKDVHTSQQPNGENTATASDDNH). Polar residues predominate over residues 262-275 (TSQQPNGENTATAS). One copy of the PFTA 5 repeat lies at 290–323 (EEIQLCTDLIESYPGHETLWCHRRHVFYLWHQWR).

Belongs to the protein prenyltransferase subunit alpha family.

This Danio rerio (Zebrafish) protein is Protein prenyltransferase alpha subunit repeat-containing protein 1 (ptar1).